The following is a 102-amino-acid chain: Small ribosomal subunit protein uS10 (102 aa).

Belongs to the universal ribosomal protein uS10 family. Part of the 30S ribosomal subunit.

Involved in the binding of tRNA to the ribosomes. The protein is Small ribosomal subunit protein uS10 of Lactobacillus delbrueckii subsp. bulgaricus (strain ATCC 11842 / DSM 20081 / BCRC 10696 / JCM 1002 / NBRC 13953 / NCIMB 11778 / NCTC 12712 / WDCM 00102 / Lb 14).